The sequence spans 197 residues: ATP-dependent Clp protease proteolytic subunit 1 (197 aa).

The active-site Nucleophile is the Ser-100. The active site involves His-125.

It belongs to the peptidase S14 family. Fourteen ClpP subunits assemble into 2 heptameric rings which stack back to back to give a disk-like structure with a central cavity, resembling the structure of eukaryotic proteasomes.

Its subcellular location is the cytoplasm. The catalysed reaction is Hydrolysis of proteins to small peptides in the presence of ATP and magnesium. alpha-casein is the usual test substrate. In the absence of ATP, only oligopeptides shorter than five residues are hydrolyzed (such as succinyl-Leu-Tyr-|-NHMec, and Leu-Tyr-Leu-|-Tyr-Trp, in which cleavage of the -Tyr-|-Leu- and -Tyr-|-Trp bonds also occurs).. Cleaves peptides in various proteins in a process that requires ATP hydrolysis. Has a chymotrypsin-like activity. Plays a major role in the degradation of misfolded proteins. The protein is ATP-dependent Clp protease proteolytic subunit 1 of Gloeobacter violaceus (strain ATCC 29082 / PCC 7421).